The sequence spans 90 residues: Conotoxin Im6.2 (90 aa).

A signal peptide spans 1–18; it reads MKLTILLLVAALLVLTQA. A propeptide spanning residues 19–29 is cleaved from the precursor; sequence RTERRRVKSRK. Disulfide bonds link cysteine 61–cysteine 75, cysteine 68–cysteine 79, and cysteine 74–cysteine 84. Glutamate 89 carries the glutamic acid 1-amide modification.

This sequence belongs to the conotoxin O2 superfamily. Expressed by the venom duct.

It is found in the secreted. Probable neurotoxin. The chain is Conotoxin Im6.2 from Conus imperialis (Imperial cone).